We begin with the raw amino-acid sequence, 450 residues long: Large terminase protein homolog UL15b (450 aa).

This sequence belongs to the herpesviridae large terminase family.

This Psittacid herpesvirus 1 (isolate Amazon parrot/-/97-0001/1997) (PsHV-1) protein is Large terminase protein homolog UL15b (UL15b).